Consider the following 947-residue polypeptide: Protein NETWORKED 2D (947 aa).

The region spanning 10–90 (YSWWWASHIR…ERYDHISTEL (81 aa)) is the NAB domain. Coiled-coil stretches lie at residues 176–205 (KPEA…SSYE), 247–342 (MTET…HFES), and 375–433 (TALI…VLDK). 2 disordered regions span residues 455-555 (NLHE…DKTD) and 580-620 (EKQG…GEPD). A compositionally biased stretch (basic and acidic residues) spans 474–514 (PQKDLEGEKRTLDISEEIKEHQKETGEEKKEAPVKSVKFEQ). Positions 525–536 (TIPSTNPDTVLE) are enriched in polar residues. Composition is skewed to basic and acidic residues over residues 537–555 (STEK…DKTD), 580–589 (EKQGESDKID), and 610–620 (EDQKEKEGEPD). Coiled-coil stretches lie at residues 645-684 (RNFK…LLQK) and 744-773 (GQIQ…DGSS).

The protein belongs to the NET family.

Plant-specific actin binding protein. May be part of a membrane-cytoskeletal adapter complex. The protein is Protein NETWORKED 2D of Arabidopsis thaliana (Mouse-ear cress).